The following is a 95-amino-acid chain: uncharacterized protein (95 aa).

The interval 46-68 (GDRGTNGRTEAEHDGIPHSRKKV) is disordered.

This is an uncharacterized protein from Schizosaccharomyces pombe (strain 972 / ATCC 24843) (Fission yeast).